We begin with the raw amino-acid sequence, 1140 residues long: Eukaryotic translation initiation factor 3 subunit A (1140 aa).

The PCI domain maps to Leu-319–Thr-502. Composition is skewed to basic and acidic residues over residues Gln-589–Glu-624, Ala-830–Asp-900, and Glu-921–Ser-984. Disordered stretches follow at residues Gln-589 to Ile-632 and Ala-830 to Arg-1140. Residues Ala-987–Ala-998 show a composition bias toward low complexity. Composition is skewed to basic and acidic residues over residues Ser-999–Arg-1050, Asp-1058–Gln-1086, and Pro-1109–Asp-1130.

This sequence belongs to the eIF-3 subunit A family. Component of the eukaryotic translation initiation factor 3 (eIF-3) complex. The eIF-3 complex interacts with pix.

It localises to the cytoplasm. RNA-binding component of the eukaryotic translation initiation factor 3 (eIF-3) complex, which is involved in protein synthesis of a specialized repertoire of mRNAs and, together with other initiation factors, stimulates binding of mRNA and methionyl-tRNAi to the 40S ribosome. The eIF-3 complex specifically targets and initiates translation of a subset of mRNAs involved in cell proliferation. This chain is Eukaryotic translation initiation factor 3 subunit A, found in Drosophila ananassae (Fruit fly).